Reading from the N-terminus, the 340-residue chain is Dihydroorotate dehydrogenase (quinone) (340 aa).

FMN-binding positions include 67–71 (AGFDK) and threonine 91. Lysine 71 contributes to the substrate binding site. 116–120 (NRMGF) serves as a coordination point for substrate. The FMN site is built by asparagine 143 and asparagine 176. Residue asparagine 176 coordinates substrate. Serine 179 (nucleophile) is an active-site residue. Residue asparagine 181 participates in substrate binding. Lysine 217 and threonine 245 together coordinate FMN. Position 246-247 (246-247 (NT)) interacts with substrate. Residues glycine 267, glycine 296, and 317–318 (YT) contribute to the FMN site.

Belongs to the dihydroorotate dehydrogenase family. Type 2 subfamily. Monomer. FMN serves as cofactor.

The protein localises to the cell membrane. The catalysed reaction is (S)-dihydroorotate + a quinone = orotate + a quinol. The protein operates within pyrimidine metabolism; UMP biosynthesis via de novo pathway; orotate from (S)-dihydroorotate (quinone route): step 1/1. Catalyzes the conversion of dihydroorotate to orotate with quinone as electron acceptor. This chain is Dihydroorotate dehydrogenase (quinone), found in Christiangramia forsetii (strain DSM 17595 / CGMCC 1.15422 / KT0803) (Gramella forsetii).